A 606-amino-acid polypeptide reads, in one-letter code: Transmembrane 9 superfamily member 1 (606 aa).

The signal sequence occupies residues 1–27 (MTVLGYPRSWSCHCLPVLILLLGIGHG). A glycan (N-linked (GlcNAc...) asparagine) is linked at asparagine 178. 4 helical membrane-spanning segments follow: residues 237–257 (LSII…AVIL), 310–330 (VLGV…MALL), 339–359 (GAIN…SGYV), and 373–393 (VWNI…TWSV). Asparagine 401 carries N-linked (GlcNAc...) asparagine glycosylation. The next 4 helical transmembrane spans lie at 412–432 (ILLL…IGGI), 469–489 (VGGF…FATV), 499–519 (GILF…SIAL), and 535–555 (SVLS…FYYA). Asparagine 559 is a glycosylation site (N-linked (GlcNAc...) asparagine). Residues 570–590 (FGYSLLTGYVFFLMLGTISFF) form a helical membrane-spanning segment.

Belongs to the nonaspanin (TM9SF) (TC 9.A.2) family.

The protein resides in the lysosome membrane. It is found in the cytoplasmic vesicle. It localises to the autophagosome membrane. Functionally, plays an essential role in autophagy. The sequence is that of Transmembrane 9 superfamily member 1 (Tm9sf1) from Mus musculus (Mouse).